The following is a 283-amino-acid chain: Thymidylate synthase (283 aa).

R33 contacts dUMP. Residue H63 participates in (6R)-5,10-methylene-5,6,7,8-tetrahydrofolate binding. 138–139 serves as a coordination point for dUMP; that stretch reads RR. C158 acts as the Nucleophile in catalysis. DUMP is bound by residues 185–188, N196, and 226–228; these read RSAD and HIY. Position 188 (D188) interacts with (6R)-5,10-methylene-5,6,7,8-tetrahydrofolate. A282 provides a ligand contact to (6R)-5,10-methylene-5,6,7,8-tetrahydrofolate.

Belongs to the thymidylate synthase family. Bacterial-type ThyA subfamily. As to quaternary structure, homodimer.

Its subcellular location is the cytoplasm. The enzyme catalyses dUMP + (6R)-5,10-methylene-5,6,7,8-tetrahydrofolate = 7,8-dihydrofolate + dTMP. It functions in the pathway pyrimidine metabolism; dTTP biosynthesis. Catalyzes the reductive methylation of 2'-deoxyuridine-5'-monophosphate (dUMP) to 2'-deoxythymidine-5'-monophosphate (dTMP) while utilizing 5,10-methylenetetrahydrofolate (mTHF) as the methyl donor and reductant in the reaction, yielding dihydrofolate (DHF) as a by-product. This enzymatic reaction provides an intracellular de novo source of dTMP, an essential precursor for DNA biosynthesis. This Methylibium petroleiphilum (strain ATCC BAA-1232 / LMG 22953 / PM1) protein is Thymidylate synthase.